A 299-amino-acid chain; its full sequence is Regucalcin (299 aa).

Glu18 provides a ligand contact to a divalent metal cation. Substrate-binding residues include Arg101, Asn103, and Glu121. Lys144 bears the N6-succinyllysine mark. The a divalent metal cation site is built by Asn154 and Asp204. Asp204 serves as the catalytic Proton donor/acceptor. Residues Lys244 and Lys253 each carry the N6-succinyllysine modification.

Belongs to the SMP-30/CGR1 family. Monomer. Requires Zn(2+) as cofactor. The cofactor is Mn(2+). Ca(2+) is required as a cofactor. It depends on Mg(2+) as a cofactor.

The protein resides in the cytoplasm. It carries out the reaction D-glucono-1,5-lactone + H2O = D-gluconate + H(+). Functionally, gluconolactonase with low activity towards other sugar lactones, including gulonolactone and galactonolactone. Can also hydrolyze diisopropyl phosphorofluoridate and phenylacetate (in vitro). Calcium-binding protein. Modulates Ca(2+) signaling, and Ca(2+)-dependent cellular processes and enzyme activities. This is Regucalcin (RGN) from Homo sapiens (Human).